The following is a 114-amino-acid chain: Large ribosomal subunit protein uL22c (114 aa).

Belongs to the universal ribosomal protein uL22 family. In terms of assembly, part of the 50S ribosomal subunit.

It localises to the plastid. The protein resides in the chloroplast. This protein binds specifically to 23S rRNA. Functionally, the globular domain of the protein is located near the polypeptide exit tunnel on the outside of the subunit, while an extended beta-hairpin is found that lines the wall of the exit tunnel in the center of the 70S ribosome. The chain is Large ribosomal subunit protein uL22c (rpl22) from Gracilaria tenuistipitata var. liui (Red alga).